The primary structure comprises 222 residues: Probable transaldolase (222 aa).

The active-site Schiff-base intermediate with substrate is Lys-83.

Belongs to the transaldolase family. Type 3B subfamily.

It localises to the cytoplasm. The catalysed reaction is D-sedoheptulose 7-phosphate + D-glyceraldehyde 3-phosphate = D-erythrose 4-phosphate + beta-D-fructose 6-phosphate. It functions in the pathway carbohydrate degradation; pentose phosphate pathway; D-glyceraldehyde 3-phosphate and beta-D-fructose 6-phosphate from D-ribose 5-phosphate and D-xylulose 5-phosphate (non-oxidative stage): step 2/3. Functionally, transaldolase is important for the balance of metabolites in the pentose-phosphate pathway. This chain is Probable transaldolase, found in Nitrosopumilus maritimus (strain SCM1).